The primary structure comprises 185 residues: Elongation factor P (185 aa).

This sequence belongs to the elongation factor P family.

It localises to the cytoplasm. The protein operates within protein biosynthesis; polypeptide chain elongation. Functionally, involved in peptide bond synthesis. Stimulates efficient translation and peptide-bond synthesis on native or reconstituted 70S ribosomes in vitro. Probably functions indirectly by altering the affinity of the ribosome for aminoacyl-tRNA, thus increasing their reactivity as acceptors for peptidyl transferase. The sequence is that of Elongation factor P (efp) from Thermotoga maritima (strain ATCC 43589 / DSM 3109 / JCM 10099 / NBRC 100826 / MSB8).